The sequence spans 732 residues: Iron-sulfur clusters transporter ATM1, mitochondrial (732 aa).

A mitochondrion-targeting transit peptide spans 1–55 (MGFGSCSRHALFTPAAFSGSFTTMTTSCFKRVYTAQIHGGDALGKRLPSVSSFSG). The Mitochondrial matrix segment spans residues 56–143 (QLPRHGLHRQ…KNNPNVKFRV (88 aa)). Residues 71–114 (STSHRRQTSPPPSPRTTSQSPTVPSKASTTPPTSLNTSKPIATE) are disordered. Residues 85-95 (RTTSQSPTVPS) show a composition bias toward low complexity. A compositionally biased stretch (polar residues) spans 96–114 (KASTTPPTSLNTSKPIATE). Residues 144–164 (IGALTLLVAGKVLNVQVPFFF) form a helical membrane-spanning segment. The ABC transmembrane type-1 domain maps to 144 to 432 (IGALTLLVAG…LGTVYRELRQ (289 aa)). Over 165 to 181 (KTIVDSLNVPITESTTV) the chain is Mitochondrial intermembrane. The helical transmembrane segment at 182-202 (WVLAGASIAGYGAARILTTLF) threads the bilayer. Residues 203–262 (GELRNAVFASVAQNAIRKVARETFEHLLNMDMKFHLERQTGGLTRAIDRGTKGISFILSS) are Mitochondrial matrix-facing. The helical transmembrane segment at 263–283 (IVFHVIPTALEISMVCGILSW) threads the bilayer. Residue K284 is a topological domain, mitochondrial intermembrane. A helical membrane pass occupies residues 285–305 (FGWDFAAVTAITMLLYTWFTI). Residues 306–378 (KTTAWRTTFR…SLAALNSGQN (73 aa)) are Mitochondrial matrix-facing. Glutathione contacts are provided by residues 311–315 (RTTFR) and 374–377 (NSGQ). Residues 379–399 (FIFSSALTMMMLLGAQGIVKG) form a helical membrane-spanning segment. The Mitochondrial intermembrane portion of the chain corresponds to 400 to 405 (TMTVGD). The chain crosses the membrane as a helical span at residues 406–426 (LVLVNQLVFQLSLPLNFLGTV). Position 424 (G424) interacts with glutathione. The Mitochondrial matrix segment spans residues 427-732 (YRELRQSLID…LEVVDEKKKQ (306 aa)). Residues 466–702 (IEFRNVAFAY…PGGVYHRLWQ (237 aa)) enclose the ABC transporter domain. ATP contacts are provided by residues Y475 and 499–506 (GPSGCGKS). The interval 708-732 (STQPTDEEIERQREELEVVDEKKKQ) is disordered. A compositionally biased stretch (basic and acidic residues) spans 717–732 (ERQREELEVVDEKKKQ).

Belongs to the ABC transporter superfamily. ABCB family. Heavy Metal importer (TC 3.A.1.210) subfamily. Homodimer.

It localises to the mitochondrion inner membrane. In terms of biological role, performs an essential function in the generation of cytoplasmic iron-sulfur proteins by mediating the ATP-dependent export of mitochondrial Fe/S cluster precursors synthesized by NFS1 and other mitochondrial proteins. Hydrolyzes ATP. Binds glutathione and may function by transporting a glutathione-conjugated iron-sulfur compound. Plays a role during copper stress, in a manner dependent on the copper metalloregulatory transcription factor CUF1. This Cryptococcus neoformans var. grubii serotype A (strain H99 / ATCC 208821 / CBS 10515 / FGSC 9487) (Filobasidiella neoformans var. grubii) protein is Iron-sulfur clusters transporter ATM1, mitochondrial.